A 115-amino-acid polypeptide reads, in one-letter code: Replication initiation control protein YabA (115 aa).

Zn(2+) contacts are provided by histidine 90, cysteine 92, cysteine 106, and cysteine 109.

Belongs to the YabA family. In terms of assembly, homotetramer. Interacts with both DnaA and DnaN, acting as a bridge between these two proteins. Zn(2+) is required as a cofactor.

Its subcellular location is the cytoplasm. The protein resides in the nucleoid. Functionally, involved in control of chromosome replication initiation. Inhibits the cooperative binding of DnaA to the oriC region, thus negatively regulating initiation of chromosome replication. Inhibits the ability of DnaA-ATP to form a helix on DNA; does not disassemble preformed DnaA-DNA helices. Decreases the residence time of DnaA on the chromosome at its binding sites (oriC, replication forks and promoter-binding sites). Tethers DnaA to the replication machinery via the DNA polymerase beta sliding clamp subunit (dnaN). Associates with oriC and other DnaA targets on the chromosome in a DnaA-dependent manner. This is Replication initiation control protein YabA from Staphylococcus aureus (strain JH1).